We begin with the raw amino-acid sequence, 61 residues long: Disintegrin rubistatin (61 aa).

Residues 1-61 (NPCCDAATCK…ADCPRNGLYG (61 aa)) enclose the Disintegrin domain. Intrachain disulfides connect Cys-3–Cys-26, Cys-17–Cys-23, Cys-22–Cys-47, and Cys-35–Cys-54. Positions 39–41 (MVD) match the Cell attachment site; atypical (MVD) motif.

Belongs to the venom metalloproteinase (M12B) family. P-II subfamily. P-IIa sub-subfamily. In terms of assembly, monomer. Expressed by the venom gland.

The protein resides in the secreted. In terms of biological role, recombinant disintegrin rubistatin inhibits ADP-induced platelet aggregation. In addition, it strongly induces apoptosis, and inhibits cell migration and proliferation of the human cancer cell line SK-Mel-28. The protein is Disintegrin rubistatin of Crotalus ruber ruber (Red diamond rattlesnake).